The primary structure comprises 336 residues: N-acetyl-gamma-glutamyl-phosphate reductase (336 aa).

The active site involves C144.

This sequence belongs to the NAGSA dehydrogenase family. Type 1 subfamily.

Its subcellular location is the cytoplasm. The enzyme catalyses N-acetyl-L-glutamate 5-semialdehyde + phosphate + NADP(+) = N-acetyl-L-glutamyl 5-phosphate + NADPH + H(+). The protein operates within amino-acid biosynthesis; L-arginine biosynthesis; N(2)-acetyl-L-ornithine from L-glutamate: step 3/4. Its function is as follows. Catalyzes the NADPH-dependent reduction of N-acetyl-5-glutamyl phosphate to yield N-acetyl-L-glutamate 5-semialdehyde. This chain is N-acetyl-gamma-glutamyl-phosphate reductase, found in Methanosarcina acetivorans (strain ATCC 35395 / DSM 2834 / JCM 12185 / C2A).